A 537-amino-acid chain; its full sequence is Syncytin-2 (537 aa).

Positions 1–15 (MGLLLLVLILTPLLA) are cleaved as a signal peptide. Residues 16–478 (AYRHPDFPLL…GWLNWEGTWK (463 aa)) are Extracellular-facing. The short motif at 43-46 (CWLC) is the CXXC element. Disulfide bonds link Cys-43–Cys-46, Cys-43–Cys-439, and Cys-431–Cys-438. Residues Asn-133, Asn-146, Asn-177, Asn-220, Asn-241, Asn-247, Asn-312, and Asn-332 are each glycosylated (N-linked (GlcNAc...) asparagine). The segment at 354 to 374 (FIPLLAGLGILAGTGTGIAGI) is fusion peptide. Positions 414–430 (LQNRRGLDMLTAAQGGI) match the CKS-17 motif. Positions 431 to 439 (CLALDEKCC) match the CX6CC motif. Residue Asn-443 is glycosylated (N-linked (GlcNAc...) asparagine). Residues 479-499 (WFSWVLPFIGPLVSLLLLLLF) form a helical membrane-spanning segment. Over 500–537 (GPCLLNLITQFVSSRLQAIKLQTNGAGCRPRNIQESPF) the chain is Cytoplasmic.

The protein belongs to the gamma type-C retroviral envelope protein family. HERV class-I FRD env subfamily. As to quaternary structure, the surface and transmembrane proteins form a heterodimer. They are attached by non-covalent interactions or by a labile interchain disulfide bond. In terms of processing, specific enzymatic cleavages in vivo yield the mature SU and TM proteins. Post-translationally, the CXXC motif is highly conserved across a broad range of retroviral envelope proteins. It is thought to participate in the formation of a labile disulfide bond possibly with the CX6CC motif present in the transmembrane protein.

The protein resides in the virion. It localises to the cell membrane. This endogenous retroviral envelope protein has retained its original fusogenic properties and participates in trophoblast fusion and the formation of a syncytium during placenta morphogenesis. The interaction with MFSD2A is apparently important for this process. Functionally, endogenous envelope proteins may have kept, lost or modified their original function during evolution but this one can still make pseudotypes with MLV, HIV-1 or SIV-1 virions and confer infectivity. Retroviral envelope proteins mediate receptor recognition and membrane fusion during early infection. The surface protein mediates receptor recognition, while the transmembrane protein anchors the envelope heterodimer to the viral membrane through one transmembrane domain. The other hydrophobic domain, called fusion peptide, mediates fusion of the viral membrane with the target cell membrane. This Macaca fascicularis (Crab-eating macaque) protein is Syncytin-2 (ERVFRD-1).